We begin with the raw amino-acid sequence, 67 residues long: Ferredoxin (67 aa).

2 consecutive 4Fe-4S ferredoxin-type domains span residues 3–31 and 36–67; these read WKVSVDQDTCIGDAICASLCPDVFEMNDE and PKVEVIEDEELYNCAKEAMEACPVSAITIEEA. Positions 12, 15, and 18 each coordinate [4Fe-4S] cluster. A disulfide bridge links Cys22 with Cys49. Residue Cys57 coordinates [4Fe-4S] cluster.

In terms of assembly, homodimer. It depends on [4Fe-4S] cluster as a cofactor. [3Fe-4S] cluster serves as cofactor.

In terms of biological role, ferredoxins are iron-sulfur proteins that transfer electrons in a wide variety of metabolic reactions. The protein is Ferredoxin (fdxA) of Pyrococcus furiosus (strain ATCC 43587 / DSM 3638 / JCM 8422 / Vc1).